Here is a 364-residue protein sequence, read N- to C-terminus: Lipoyl synthase, mitochondrial (364 aa).

Residues cysteine 99, cysteine 104, cysteine 110, cysteine 130, cysteine 134, cysteine 137, and serine 345 each contribute to the [4Fe-4S] cluster site. The Radical SAM core domain occupies 116-334 (HSTQTATIML…EQRGNELGFL (219 aa)).

It belongs to the radical SAM superfamily. Lipoyl synthase family. It depends on [4Fe-4S] cluster as a cofactor.

It is found in the mitochondrion. The enzyme catalyses [[Fe-S] cluster scaffold protein carrying a second [4Fe-4S](2+) cluster] + N(6)-octanoyl-L-lysyl-[protein] + 2 oxidized [2Fe-2S]-[ferredoxin] + 2 S-adenosyl-L-methionine + 4 H(+) = [[Fe-S] cluster scaffold protein] + N(6)-[(R)-dihydrolipoyl]-L-lysyl-[protein] + 4 Fe(3+) + 2 hydrogen sulfide + 2 5'-deoxyadenosine + 2 L-methionine + 2 reduced [2Fe-2S]-[ferredoxin]. It functions in the pathway protein modification; protein lipoylation via endogenous pathway; protein N(6)-(lipoyl)lysine from octanoyl-[acyl-carrier-protein]: step 2/2. Catalyzes the radical-mediated insertion of two sulfur atoms into the C-6 and C-8 positions of the octanoyl moiety bound to the lipoyl domains of lipoate-dependent enzymes, thereby converting the octanoylated domains into lipoylated derivatives. The sequence is that of Lipoyl synthase, mitochondrial from Drosophila mojavensis (Fruit fly).